The primary structure comprises 116 residues: Proline-rich protein 9 (116 aa).

This chain is Proline-rich protein 9 (PRR9), found in Homo sapiens (Human).